Reading from the N-terminus, the 176-residue chain is O-acetyl-ADP-ribose deacetylase (176 aa).

In terms of domain architecture, Macro spans 1–175 (MSGRINVVQG…LYQRLLGQYD (175 aa)). Residues 11 to 12 (DI), asparagine 25, 33 to 35 (GVD), and 122 to 126 (STGIY) contribute to the substrate site. The Proton acceptor role is filled by aspartate 35.

It belongs to the MacroD-type family. YmdB subfamily. In terms of assembly, homodimer. Interacts with RNase III.

The enzyme catalyses 3''-O-acetyl-ADP-D-ribose + H2O = ADP-D-ribose + acetate + H(+). The catalysed reaction is 2''-O-acetyl-ADP-D-ribose + H2O = ADP-D-ribose + acetate + H(+). Its function is as follows. Deacetylates O-acetyl-ADP ribose to yield ADP-ribose and free acetate. Down-regulates ribonuclease 3 (RNase III) activity. Acts by interacting directly with the region of the ribonuclease that is required for dimerization/activation. In Cronobacter turicensis (strain DSM 18703 / CCUG 55852 / LMG 23827 / z3032), this protein is O-acetyl-ADP-ribose deacetylase.